Here is a 102-residue protein sequence, read N- to C-terminus: Integration host factor subunit alpha (102 aa).

The disordered stretch occupies residues 49–71; sequence FGNFQLRTKPQRPGRNPKTGEEI.

Belongs to the bacterial histone-like protein family. Heterodimer of an alpha and a beta chain.

Its function is as follows. This protein is one of the two subunits of integration host factor, a specific DNA-binding protein that functions in genetic recombination as well as in transcriptional and translational control. The sequence is that of Integration host factor subunit alpha from Nitrosomonas eutropha (strain DSM 101675 / C91 / Nm57).